The primary structure comprises 382 residues: ATP phosphoribosyltransferase regulatory subunit (382 aa).

This sequence belongs to the class-II aminoacyl-tRNA synthetase family. HisZ subfamily. Heteromultimer composed of HisG and HisZ subunits.

It localises to the cytoplasm. Its pathway is amino-acid biosynthesis; L-histidine biosynthesis; L-histidine from 5-phospho-alpha-D-ribose 1-diphosphate: step 1/9. In terms of biological role, required for the first step of histidine biosynthesis. May allow the feedback regulation of ATP phosphoribosyltransferase activity by histidine. The polypeptide is ATP phosphoribosyltransferase regulatory subunit (Burkholderia thailandensis (strain ATCC 700388 / DSM 13276 / CCUG 48851 / CIP 106301 / E264)).